A 510-amino-acid polypeptide reads, in one-letter code: GTPase Der (510 aa).

EngA-type G domains lie at 4 to 168 and 222 to 395; these read PVVA…AEKM and IKIA…ACAT. Residues 10 to 17, 57 to 61, 120 to 123, 228 to 235, 275 to 279, and 340 to 343 each bind GTP; these read GRPNVGKS, DTGGI, NKTD, DTAGV, and NKWD. A KH-like domain is found at 396–480; the sequence is QKMTTSMLTR…PIRLLFQEGN (85 aa).

Belongs to the TRAFAC class TrmE-Era-EngA-EngB-Septin-like GTPase superfamily. EngA (Der) GTPase family. As to quaternary structure, associates with the 50S ribosomal subunit.

Its function is as follows. GTPase that plays an essential role in the late steps of ribosome biogenesis. The protein is GTPase Der of Pasteurella multocida (strain Pm70).